The following is a 104-amino-acid chain: Iron-sulfur cluster assembly protein CyaY (104 aa).

Belongs to the frataxin family.

In terms of biological role, involved in iron-sulfur (Fe-S) cluster assembly. May act as a regulator of Fe-S biogenesis. The protein is Iron-sulfur cluster assembly protein CyaY of Vibrio parahaemolyticus serotype O3:K6 (strain RIMD 2210633).